The sequence spans 106 residues: Cell cycle protein GpsB (106 aa).

Residues 34-67 (LDVIIQDYDNFKQEIDRLKAENEKLKKSTPAVEQ) are a coiled coil. Residues 55-83 (NEKLKKSTPAVEQSRSRSQQPPTSQVNYD) are disordered. The span at 70–79 (SRSQQPPTSQ) shows a compositional bias: low complexity.

This sequence belongs to the GpsB family. In terms of assembly, forms polymers through the coiled coil domains. Interacts with PBP1, MreC and EzrA.

Its subcellular location is the cytoplasm. In terms of biological role, divisome component that associates with the complex late in its assembly, after the Z-ring is formed, and is dependent on DivIC and PBP2B for its recruitment to the divisome. Together with EzrA, is a key component of the system that regulates PBP1 localization during cell cycle progression. Its main role could be the removal of PBP1 from the cell pole after pole maturation is completed. Also contributes to the recruitment of PBP1 to the division complex. Not essential for septum formation. This chain is Cell cycle protein GpsB, found in Oceanobacillus iheyensis (strain DSM 14371 / CIP 107618 / JCM 11309 / KCTC 3954 / HTE831).